Consider the following 221-residue polypeptide: Small ribosomal subunit protein uS2c (221 aa).

Belongs to the universal ribosomal protein uS2 family.

It localises to the plastid. Its subcellular location is the chloroplast. The chain is Small ribosomal subunit protein uS2c (rps2) from Cyanidioschyzon merolae (strain NIES-3377 / 10D) (Unicellular red alga).